The sequence spans 240 residues: Axial regulator YABBY 3 (240 aa).

The segment at 30–57 (CSFCDTVLAVSVPPSSLFKTVTVRCGHC) adopts a C4-type zinc-finger fold. Residues 135–156 (DHLQEMPRPPPANRPPEKRQRV) are disordered.

It belongs to the YABBY family. In terms of assembly, interacts with SPL/NZZ. Interacts with SPEAR2. Binds to LUG and LUH; these complexes promote adaxial cell identity in leaves as well as embryonic shoot apical meristem (SAM) initiation and postembryonic SAM maintenance. Expressed in abaxial regions of lateral aerial organ primordia leading to cotyledons, leaves, flower meristems, sepals, petals, stamen and carpels, but not in roots.

The protein localises to the nucleus. Functionally, involved in the abaxial cell fate determination during embryogenesis and organogenesis. Regulates the initiation of embryonic shoot apical meristem (SAM) development. Contributes to the repression of KNOX genes (STM, KNAT1/BP and KNAT2) to avoid ectopic meristems. Binds DNA without sequence specificity. This chain is Axial regulator YABBY 3 (YAB3), found in Arabidopsis thaliana (Mouse-ear cress).